A 414-amino-acid chain; its full sequence is Mannan endo-1,4-beta-mannosidase 3 (414 aa).

The signal sequence occupies residues 1 to 19 (MKCLCFVVLLAILIAQNSS). Residues asparagine 17 and asparagine 75 are each glycosylated (N-linked (GlcNAc...) asparagine). Tryptophan 87 contributes to the substrate binding site. Asparagine 133 and asparagine 153 each carry an N-linked (GlcNAc...) asparagine glycan. Asparagine 202 serves as a coordination point for substrate. Glutamate 203 acts as the Proton donor in catalysis. Position 283 (tyrosine 283) interacts with substrate. Glutamate 323 serves as the catalytic Nucleophile. Residue asparagine 343 is glycosylated (N-linked (GlcNAc...) asparagine). Tryptophan 365 is a substrate binding site. Asparagine 386 carries N-linked (GlcNAc...) asparagine glycosylation.

The protein belongs to the glycosyl hydrolase 5 (cellulase A) family. Expressed in leaves, flowers, siliques and seeds.

It is found in the secreted. The enzyme catalyses Random hydrolysis of (1-&gt;4)-beta-D-mannosidic linkages in mannans, galactomannans and glucomannans.. The polypeptide is Mannan endo-1,4-beta-mannosidase 3 (MAN3) (Arabidopsis thaliana (Mouse-ear cress)).